The chain runs to 445 residues: MSKKYFGTDGIRGRVGEYPITPDFMLKLGWAAGMAFRKMGACKVLVGKDTRISGYMFESALEAGLTSAGADVMLLGPMPTPAIAYLSRTFQAEAGIVISASHNPHDDNGIKFFSGKGTKLPDELELMIEELLDTPMTVVESSKIGKVSRINDASGRYIEFCKSSVPTGTSFSGLRIVIDCAHGATYKVAPSVFRELGAEVVVLSAQPNGLNINDNCGSTHMGQLQAAVLSEHADLGIAFDGDGDRVLMVDHTGAIVDGDELLYIIARDLHERGKLQGGVVGTLMSNLGLELALADLGIPFVRANVGDRYVIAELLERNWLVGGENSGHVVCFNHTTTGDAIIAALQVLMALKTRNEGLAQTRQALRKCPQVLINVRFGGGESPLEHPAVKEASARVTQAMAGRGRVLLRKSGTEPLVRVMVEGEDESQVRGYAEELAKLVTEVSA.

Ser-101 functions as the Phosphoserine intermediate in the catalytic mechanism. Ser-101, Asp-240, Asp-242, and Asp-244 together coordinate Mg(2+). The residue at position 101 (Ser-101) is a Phosphoserine.

Belongs to the phosphohexose mutase family. It depends on Mg(2+) as a cofactor. In terms of processing, activated by phosphorylation.

The catalysed reaction is alpha-D-glucosamine 1-phosphate = D-glucosamine 6-phosphate. Catalyzes the conversion of glucosamine-6-phosphate to glucosamine-1-phosphate. The sequence is that of Phosphoglucosamine mutase from Pseudomonas fluorescens (strain Pf0-1).